The following is a 36-amino-acid chain: Photosystem I reaction center subunit VIII (36 aa).

A helical membrane pass occupies residues 1–21 (MITFSFPSIFVPLVGLVFPAI).

Belongs to the PsaI family.

The protein resides in the plastid. The protein localises to the chloroplast thylakoid membrane. In terms of biological role, may help in the organization of the PsaL subunit. In Coffea arabica (Arabian coffee), this protein is Photosystem I reaction center subunit VIII.